Reading from the N-terminus, the 104-residue chain is Large ribosomal subunit protein uL24 (104 aa).

Belongs to the universal ribosomal protein uL24 family. As to quaternary structure, part of the 50S ribosomal subunit.

In terms of biological role, one of two assembly initiator proteins, it binds directly to the 5'-end of the 23S rRNA, where it nucleates assembly of the 50S subunit. One of the proteins that surrounds the polypeptide exit tunnel on the outside of the subunit. The chain is Large ribosomal subunit protein uL24 from Azotobacter vinelandii (strain DJ / ATCC BAA-1303).